The sequence spans 516 residues: Probable serine/threonine-protein kinase DDB_G0293276 (516 aa).

The segment at Ser-69 to Ile-115 is disordered. Low complexity predominate over residues Asn-79–Ile-115. A Protein kinase domain is found at Tyr-232–Phe-479. Residues Ile-238–Val-246 and Lys-261 contribute to the ATP site. The active-site Proton acceptor is Asp-350.

It belongs to the protein kinase superfamily. AGC Ser/Thr protein kinase family.

It catalyses the reaction L-seryl-[protein] + ATP = O-phospho-L-seryl-[protein] + ADP + H(+). The enzyme catalyses L-threonyl-[protein] + ATP = O-phospho-L-threonyl-[protein] + ADP + H(+). This Dictyostelium discoideum (Social amoeba) protein is Probable serine/threonine-protein kinase DDB_G0293276.